The sequence spans 866 residues: N-alpha-acetyltransferase 15, NatA auxiliary subunit (866 aa).

TPR repeat units follow at residues 46-79, 80-113, 148-184, and 224-257; these read GETLAMKGLTLNCLGKKEEAYELVRRGLRNDLKS, HVCWHVYGLLQRSDKKYDEAIKCYRNALKWDKDN, RASWIGYAIAYHLLEDYEMAAKILEEFRKTQQTSPDK, and LAVEETKGELLLQLCRLEDAADVYRGLQERNPEN. K262 carries the post-translational modification N6-acetyllysine. S302 carries the phosphoserine modification. 3 TPR repeats span residues 374-407, 409-441, and 485-518; these read LWVQYYLAQHYDKIGQPSIALEYINTAIESTPTL, ELFLVKAKIYKHAGNIKEAARWMDEAQALDTAD, and MWFQTECAQAYKAMNKFGEALKKCHEIERHFIEI. The tract at residues 500–866 is interaction with HYPK; it reads KFGEALKKCH…AEAEELANEI (367 aa). Phosphoserine occurs at positions 537 and 588. A compositionally biased stretch (basic and acidic residues) spans 579–594; it reads EHEADTANMSDKELKK. Positions 579-642 are disordered; the sequence is EHEADTANMS…EEIGGPKEEL (64 aa). Basic residues predominate over residues 595–604; it reads LRNKQRRAQK. The span at 606–621 shows a compositional bias: basic and acidic residues; the sequence is AQIEEEKKNAEKEKQQ. Positions 612 to 629 match the Bipartite nuclear localization signal motif; it reads KKNAEKEKQQRNQKKKKD. One copy of the TPR 8 repeat lies at 672 to 705; the sequence is IETHLFAFEIYFRKEKFLLMLQSVKRAFAIDSSH. An N6-acetyllysine mark is found at K735 and K756. A phosphoserine mark is found at S855 and S856.

As to quaternary structure, component of the N-terminal acetyltransferase A complex (also called the NatA complex) composed of NAA10 and NAA15. Within the complex interacts with NAA10. Component of the N-terminal acetyltransferase A (NatA)/HYPK complex at least composed of NAA10, NAA15 and HYPK, which has N-terminal acetyltransferase activity. In complex with NAA10, interacts with HYPK. Component of the N-terminal acetyltransferase E (NatE) complex at least composed of NAA10, NAA15 and NAA50. Within the complex interacts with NAA10; the interaction is required for binding to NAA50. Interacts with NAAT50. The interaction of the NatA complex with NAA50 reduces the acetylation activity of the NatA complex. Component of the N-terminal acetyltransferase E (NatE)/HYPK complex at least composed of NAA10, NAA15, NAA50 and HYPK. In complex with NAA10 interacts with HYPK; the interaction with HYPK reduces the capacity of the NatA complex to interact with NAA50. Interacts with NAA11. Interacts with XRCC6 and XRCC5. Post-translationally, cleaved by caspases during apoptosis, resulting in a stable 35 kDa fragment. As to expression, expressed at high levels in testis and in ocular endothelial cells. Also found in brain (corpus callosum), heart, colon, bone marrow and at lower levels in most adult tissues, including thyroid, liver, pancreas, mammary and salivary glands, lung, ovary, urogenital system and upper gastrointestinal tract. Overexpressed in gastric cancer, in papillary thyroid carcinomas and in a Burkitt lymphoma cell line (Daudi). Specifically suppressed in abnormal proliferating blood vessels in eyes of patients with proliferative diabetic retinopathy.

The protein resides in the cytoplasm. The protein localises to the nucleus. Auxillary subunit of N-terminal acetyltransferase complexes which display alpha (N-terminal) acetyltransferase (NAT) activity. The NAT activity may be important for vascular, hematopoietic and neuronal growth and development. Required to control retinal neovascularization in adult ocular endothelial cells. In complex with XRCC6 and XRCC5 (Ku80), up-regulates transcription from the osteocalcin promoter. In Homo sapiens (Human), this protein is N-alpha-acetyltransferase 15, NatA auxiliary subunit (NAA15).